Here is a 235-residue protein sequence, read N- to C-terminus: Transmembrane emp24 domain-containing protein 9 (235 aa).

Residues 1 to 37 (MAAVRGVRVVGTSPGLLLGRGMRAFLLLLCLAARGGA) form the signal peptide. Residues 38 to 202 (LYFHIGETEK…RQTSESTNQR (165 aa)) are Lumenal-facing. The region spanning 47 to 145 (KKCFIEEIPD…MLRVHLDIQV (99 aa)) is the GOLD domain. The required for interaction with STX17 stretch occupies residues 121 to 160 (CLHSNSTKFSLFAGGMLRVHLDIQVGEHANDYAEIAAKDK). An N-linked (GlcNAc...) asparagine glycan is attached at Asn125. Positions 154–184 (EIAAKDKLSELQLRVRQLVEQVEQIQKEQNY) form a coiled coil. Residue Lys160 is modified to N6-acetyllysine. The helical transmembrane segment at 203–222 (VLWWSILQTLILVAIGVWQM) threads the bilayer. Residues 223 to 235 (RHLKSFFEAKKLV) are Cytoplasmic-facing. Positions 228 to 229 (FF) match the COPII vesicle coat-binding motif. Residues 228 to 235 (FFEAKKLV) carry the COPI vesicle coat-binding motif.

The protein belongs to the EMP24/GP25L family. Monomer and homodimer in endoplasmic reticulum. Predominantly monomeric and to lesser extent homodimeric in endoplasmic reticulum-Golgi intermediate compartment and cis-Golgi network. Probably oligomerizes with other members of the EMP24/GP25L family such as TMED2, TMED7 and TMED10. Interacts with TMED5. Interacts (via C-terminus) with COPG1; the interaction involves dimeric TMED9. Interacts with PTPN2 and SPAST. Interacts with STX17; the interaction is direct. Post-translationally, N-linked glycosylated containing high mannose.

It is found in the endoplasmic reticulum membrane. Its subcellular location is the golgi apparatus. It localises to the cis-Golgi network membrane. The protein localises to the endoplasmic reticulum-Golgi intermediate compartment membrane. The protein resides in the trans-Golgi network membrane. Its function is as follows. Appears to be involved in vesicular protein trafficking, mainly in the early secretory pathway. In COPI vesicle-mediated retrograde transport involved in the coatomer recruitment to membranes of the early secretory pathway. Increases coatomer-dependent activity of ARFGAP2. Thought to play a crucial role in the specific retention of p24 complexes in cis-Golgi membranes; specifically contributes to the coupled localization of TMED2 and TMED10 in the cis-Golgi network. May be involved in organization of intracellular membranes, such as of the ER-Golgi intermediate compartment and the Golgi apparatus. Involved in ER localization of PTPN2. This chain is Transmembrane emp24 domain-containing protein 9 (Tmed9), found in Rattus norvegicus (Rat).